Reading from the N-terminus, the 102-residue chain is Small ribosomal subunit protein eS24 (102 aa).

The interval 70 to 102 (VYDSPAQAAEVEHDHMLERNKIGADDADAEEAE) is disordered. The segment covering 79–93 (EVEHDHMLERNKIGA) has biased composition (basic and acidic residues).

The protein belongs to the eukaryotic ribosomal protein eS24 family.

This Halobacterium salinarum (strain ATCC 29341 / DSM 671 / R1) protein is Small ribosomal subunit protein eS24.